A 78-amino-acid chain; its full sequence is Acyl carrier protein (78 aa).

The Carrier domain occupies 4 to 78 (AEIKDKVYDI…QQAIDYIVKK (75 aa)). Ser39 is modified (O-(pantetheine 4'-phosphoryl)serine).

It belongs to the acyl carrier protein (ACP) family. In terms of processing, 4'-phosphopantetheine is transferred from CoA to a specific serine of apo-ACP by AcpS. This modification is essential for activity because fatty acids are bound in thioester linkage to the sulfhydryl of the prosthetic group.

The protein resides in the cytoplasm. Its pathway is lipid metabolism; fatty acid biosynthesis. Its function is as follows. Carrier of the growing fatty acid chain in fatty acid biosynthesis. This chain is Acyl carrier protein, found in Chlorobium limicola (strain DSM 245 / NBRC 103803 / 6330).